The chain runs to 370 residues: Tyrosyl-DNA phosphodiesterase 2 (370 aa).

Position 1 is an N-acetylmethionine (M1). The segment at 1–32 (MASGSSSDAAEPAGPAGRAASAPEAAQAEEDR) is disordered. Positions 9 to 26 (AAEPAGPAGRAASAPEAA) are enriched in low complexity. K34 participates in a covalent cross-link: Glycyl lysine isopeptide (Lys-Gly) (interchain with G-Cter in SUMO2). T99 carries the post-translational modification Phosphothreonine; by ACVR1B. Residues 130–134 (NIDGL) are interaction with 5' end of substrate DNA. The Mg(2+) site is built by D132 and E162. The interval 236–241 (HLESTR) is interaction with 5' end of substrate DNA. The active-site Proton donor/acceptor is D272. 2 interaction with 5' end of substrate DNA regions span residues 274–276 (NLR) and 315–321 (LRIPAAY).

Belongs to the CCR4/nocturin family. Interacts with TRAF2, TRAF3, TRAF5, TRAF6, TNFRSF8/CD30, TNFRSF5/CD40, TNFRSF1B/TNF-R75, ETS1, ETS2, FLI1, SMAD3 and ACVR1B/ALK4. It depends on Mg(2+) as a cofactor. The cofactor is Mn(2+). In terms of processing, ubiquitinated by TRAF6. In terms of tissue distribution, widely expressed. Expressed in whole brain, cerebellum, quiescent cortical astrocytes and cerebellar granule neurons.

It localises to the nucleus. Its subcellular location is the PML body. It is found in the nucleolus. The protein resides in the cytoplasm. Functionally, DNA repair enzyme that can remove a variety of covalent adducts from DNA through hydrolysis of a 5'-phosphodiester bond, giving rise to DNA with a free 5' phosphate. Catalyzes the hydrolysis of dead-end complexes between DNA and the topoisomerase 2 (TOP2) active site tyrosine residue. The 5'-tyrosyl DNA phosphodiesterase activity can enable the repair of TOP2-induced DNA double-strand breaks/DSBs without the need for nuclease activity, creating a 'clean' DSB with 5'-phosphate termini that are ready for ligation. Thereby, protects the transcription of many genes involved in neurological development and maintenance from the abortive activity of TOP2. Hydrolyzes 5'-phosphoglycolates on protruding 5' ends on DSBs due to DNA damage by radiation and free radicals. Has preference for single-stranded DNA or duplex DNA with a 4 base pair overhang as substrate. Also has 3'-tyrosyl DNA phosphodiesterase activity, but less efficiently and much slower than TDP1. Constitutes the major if not only 5'-tyrosyl-DNA phosphodiesterase in cells. Also acts as an adapter by participating in the specific activation of MAP3K7/TAK1 in response to TGF-beta: associates with components of the TGF-beta receptor-TRAF6-TAK1 signaling module and promotes their ubiquitination dependent complex formation. Involved in non-canonical TGF-beta induced signaling routes. May also act as a negative regulator of ETS1 and may inhibit NF-kappa-B activation. Acts as a regulator of ribosome biogenesis following stress. In Mus musculus (Mouse), this protein is Tyrosyl-DNA phosphodiesterase 2 (Tdp2).